Consider the following 752-residue polypeptide: DNA topoisomerase 4 subunit A (752 aa).

Positions 31–494 (LPFIGDGLKP…EAKAMSEHDM (464 aa)) constitute a Topo IIA-type catalytic domain. The O-(5'-phospho-DNA)-tyrosine intermediate role is filled by Y120. Disordered regions lie at residues 472-492 (YGDDRRSPLQEREEAKAMSEH) and 718-752 (TGERGRRGTLMRGLQRIDRVEIDSPRRASSGDSEE). 2 stretches are compositionally biased toward basic and acidic residues: residues 473 to 492 (GDDRRSPLQEREEAKAMSEH) and 732 to 743 (QRIDRVEIDSPR).

This sequence belongs to the type II topoisomerase GyrA/ParC subunit family. ParC type 1 subfamily. In terms of assembly, heterotetramer composed of ParC and ParE.

It localises to the cell membrane. The catalysed reaction is ATP-dependent breakage, passage and rejoining of double-stranded DNA.. Topoisomerase IV is essential for chromosome segregation. It relaxes supercoiled DNA. Performs the decatenation events required during the replication of a circular DNA molecule. The polypeptide is DNA topoisomerase 4 subunit A (Escherichia coli O157:H7).